We begin with the raw amino-acid sequence, 124 residues long: UPF0344 protein BH2983 (124 aa).

Transmembrane regions (helical) follow at residues 15–35 (GSWAILIILFLVSYFLIKAGK), 40–60 (KILHMIVRLFFVIMLITGAGM), 61–81 (LVYWQFAFLFIVKGVLAIVLI), and 102–122 (IYWIVFITCLVLVALIGYNVI).

It belongs to the UPF0344 family.

It is found in the cell membrane. In Halalkalibacterium halodurans (strain ATCC BAA-125 / DSM 18197 / FERM 7344 / JCM 9153 / C-125) (Bacillus halodurans), this protein is UPF0344 protein BH2983.